We begin with the raw amino-acid sequence, 242 residues long: Venom nerve growth factor 2 (242 aa).

The first 18 residues, 1–18 (MSMLCYTLIIAFLIGIWA), serve as a signal peptide directing secretion. Positions 19-125 (APQSEDNVPL…ALNRNIQAKR (107 aa)) are excised as a propeptide. Positions 47 to 66 (DLKTSRNTDQRHPAPKKADD) are enriched in basic and acidic residues. The interval 47–70 (DLKTSRNTDQRHPAPKKADDQELG) is disordered. Intrachain disulfides connect cysteine 139–cysteine 203, cysteine 181–cysteine 231, and cysteine 191–cysteine 233.

Belongs to the NGF-beta family. In terms of assembly, homodimer; non-covalently linked. In terms of tissue distribution, expressed by the venom gland.

The protein resides in the secreted. In terms of biological role, nerve growth factor is important for the development and maintenance of the sympathetic and sensory nervous systems. It stimulates division and differentiation of sympathetic and embryonic sensory neurons as well as basal forebrain cholinergic neurons in the brain. Its relevance in the snake venom is not clear. However, it has been shown to inhibit metalloproteinase-dependent proteolysis of platelet glycoprotein Ib alpha, suggesting a metalloproteinase inhibition to prevent metalloprotease autodigestion and/or protection against prey proteases. Binds a lipid between the two protein chains in the homodimer. The lipid-bound form promotes histamine relase from mouse mast cells, contrary to the lipid-free form. The polypeptide is Venom nerve growth factor 2 (Pseudechis australis (Mulga snake)).